The chain runs to 428 residues: Endoplasmic reticulum junction formation protein lunapark (428 aa).

The N-myristoyl glycine moiety is linked to residue Gly-2. The Cytoplasmic segment spans residues 2–45; the sequence is GGLFSRWRTKPSTVEVLESIDKEIQALEEFREKNQRLQKLWVGR. The stretch at 16 to 41 forms a coiled coil; the sequence is EVLESIDKEIQALEEFREKNQRLQKL. Residues 46-66 traverse the membrane as a helical segment; the sequence is LILYSSVLYLFTCLIVYLWYL. Over 67-77 the chain is Lumenal; the sequence is PDEFTARLAMT. The helical transmembrane segment at 78 to 98 threads the bilayer; it reads LPFFAFPLIIWSIRTVIIFFF. The Cytoplasmic portion of the chain corresponds to 99–428; sequence SKRTERNNEA…ELSGESLTAE (330 aa). A coiled-coil region spans residues 102 to 128; sequence TERNNEALDDLKSQRKKILEEVMEKET. Phosphoserine occurs at positions 114, 153, 177, 182, and 194. Positions 143 to 247 are disordered; the sequence is SKKAKECEPP…HPPGPPLARP (105 aa). The segment covering 185-198 has biased composition (pro residues); sequence QGPPPQVPVSPGPP. A phosphothreonine mark is found at Thr-211 and Thr-213. A phosphoserine mark is found at Ser-217 and Ser-227. Residues 276–301 form a C4-type; plays a role in ER morphology zinc finger; it reads CQQCFSHNGMALKEEFEYIAFRCAYC. Phosphoserine occurs at positions 321, 353, and 384. Positions 356–428 are disordered; it reads HDVLDDNTEQ…ELSGESLTAE (73 aa). Positions 386-401 are enriched in acidic residues; sequence SEEPEEKQETENEEAS. Residue Ser-414 is modified to Phosphoserine.

Belongs to the lunapark family. As to quaternary structure, homodimer; homodimerization requires the C4-type zinc finger motif and decreases during mitosis in a phosphorylation-dependent manner. Post-translationally, myristoylated; myristoylation is necessary for the endoplasmic reticulum (ER) three-way ER tubular junction formation, but is not required neither for membrane translocation, membrane topology formation, nor for the specific localization to ER membranes. Phosphorylated. Phosphorylation occurs at Ser-177, Ser-182, Ser-217, Ser-227, Ser-321 and Ser-384 during interphase. Phosphorylation occurs at Ser-114, Ser-153, Ser-194, Thr-211 and Ser-353 during mitosis; these phosphorylations reduce both its homodimerization and the ER three-way tubular junction formation. In terms of processing, subject to proteasomal degradation following phosphorylation during mitosis. In terms of tissue distribution, expressed in neural precursor cells, where it is detected at the growth-cone-like structure and branching sites of neurite-like processes.

Its subcellular location is the endoplasmic reticulum membrane. Endoplasmic reticulum (ER)-shaping membrane protein that plays a role in determining ER morphology. Involved in the stabilization of nascent three-way ER tubular junctions within the ER network. May also play a role as a curvature-stabilizing protein within the three-way ER tubular junction network. May be involved in limb development. Is involved in central nervous system development. The protein is Endoplasmic reticulum junction formation protein lunapark of Homo sapiens (Human).